The chain runs to 1153 residues: AP-3 complex subunit delta-1 (1153 aa).

Position 2 is an N-acetylalanine (Ala-2). 11 HEAT repeats span residues 34–71, 77–114, 142–179, 180–216, 254–292, 299–336, 338–373, 375–409, 431–468, 497–535, and 548–585; these read KYISQCIDEIKQELKQDNIAVKANAVCKLTYLQMLGYD, FNIIEVMSASKFTFKRIGYLAASQSFHEGTDVIMLTTN, DLARDLANDIMTLMSHTKPYIRKKAVLIMYKVFLKYPE, SLRPAFPRLKEKLEDPDPGVQSAAVNVICELARRNPK, RLGKKLIEPLTNLIHSTSAMSLLYECVNTVIAVLISLSS, ASIQLCVQKLRILIEDSDQNLKYLGLLAMSKILKTHPK, VQSHKDLILQCLDDKDESIRLRALDLLYGMVSKKNL, EIVKKLMTHVDKAEGTTYRDELLTKIIDICSQSNY, TRHGHLIAAQMLDVAIRVKAIRKFAVSQMSALLDSAHL, QEPHHTLEAMLRPRVTTLPGHIQAVYVQNVVKLYASILQ, and AVTQLMVDRLPQFVQSADLEVQERASCILQLVKHIQKL. Disordered stretches follow at residues 629-696 and 726-920; these read EPLS…YQDT and KLEE…PPES. Phosphoserine occurs at positions 632, 634, 636, and 658. Residues 639–675 show a composition bias toward basic and acidic residues; sequence ERPRAVFHEEEQRRPKHRPSEADEEELARRREARKQE. A coiled-coil region spans residues 659-679; sequence EADEEELARRREARKQEQANN. Ser-688 is modified (phosphoserine). Residues 725–756 adopt a coiled-coil conformation; it reads VKLEEERRHRQKLEKDKRRKKRKEKEKKGKRR. Positions 726-740 are enriched in basic and acidic residues; the sequence is KLEEERRHRQKLEKD. A compositionally biased stretch (basic residues) spans 741–758; that stretch reads KRRKKRKEKEKKGKRRHS. Phosphoserine occurs at positions 758 and 759. Phosphothreonine is present on Thr-762. 5 positions are modified to phosphoserine: Ser-764, Ala-785, Ser-788, Lys-828, and Ser-829. The span at 777-794 shows a compositional bias: acidic residues; it reads VTEEMPENALPSDEDDKD. Over residues 795-839 the composition is skewed to basic and acidic residues; that stretch reads PNDPYRALDIDLDKPLADSEKLPIQKHRNTETSKSPEKDVPMVEK. 2 stretches are compositionally biased toward basic residues: residues 840–853 and 863–879; these read KSKKPKKKEKKHKE and EKEKKKSPKPKKKKHRK. Positions 845–869 form a coiled coil; sequence KKKEKKHKEKERDKEKKKEKEKKKS. Phosphoserine is present on Val-931.

It belongs to the adaptor complexes large subunit family. In terms of assembly, AP-3 associates with the BLOC-1 complex. Adaptor protein complex 3 (AP-3) is a heterotetramer composed of two large adaptins (delta-type subunit AP3D1 and beta-type subunit AP3B1 or AP3B2), a medium adaptin (mu-type subunit AP3M1 or AP3M2) and a small adaptin (sigma-type subunit APS1 or AP3S2). Interacts with SLC30A2. Interacts with CLN3 (via dileucine motif); this interaction facilitates lysosomal targeting. Present in all adult tissues examined with the highest levels in skeletal muscle, heart, pancreas and testis.

The protein resides in the cytoplasm. The protein localises to the golgi apparatus membrane. Its function is as follows. Part of the AP-3 complex, an adaptor-related complex which is not clathrin-associated. The complex is associated with the Golgi region as well as more peripheral structures. It facilitates the budding of vesicles from the Golgi membrane and may be directly involved in trafficking to lysosomes. Involved in process of CD8+ T-cell and NK cell degranulation. In concert with the BLOC-1 complex, AP-3 is required to target cargos into vesicles assembled at cell bodies for delivery into neurites and nerve terminals. The polypeptide is AP-3 complex subunit delta-1 (AP3D1) (Homo sapiens (Human)).